The following is a 901-amino-acid chain: Valine--tRNA ligase (901 aa).

Positions 536–540 (KLSKS) match the 'KMSKS' region motif. Residue Lys539 participates in ATP binding. Residues 831 to 901 (LEGLISFEKE…KLQGNLEVLS (71 aa)) are a coiled coil.

The protein belongs to the class-I aminoacyl-tRNA synthetase family. ValS type 1 subfamily. Monomer.

The protein localises to the cytoplasm. The enzyme catalyses tRNA(Val) + L-valine + ATP = L-valyl-tRNA(Val) + AMP + diphosphate. Catalyzes the attachment of valine to tRNA(Val). As ValRS can inadvertently accommodate and process structurally similar amino acids such as threonine, to avoid such errors, it has a 'posttransfer' editing activity that hydrolyzes mischarged Thr-tRNA(Val) in a tRNA-dependent manner. The chain is Valine--tRNA ligase from Chlorobaculum tepidum (strain ATCC 49652 / DSM 12025 / NBRC 103806 / TLS) (Chlorobium tepidum).